A 694-amino-acid chain; its full sequence is Methionine--tRNA ligase (694 aa).

Positions 12-22 (PYANGPLHLGH) match the 'HIGH' region motif. Cysteine 143, cysteine 146, cysteine 156, and cysteine 159 together coordinate Zn(2+). The short motif at 330–334 (KMSKS) is the 'KMSKS' region element. An ATP-binding site is contributed by lysine 333. A disordered region spans residues 550–577 (LAAPATPATASKPAPAKADAKPAAAANP). The segment covering 551-575 (AAPATPATASKPAPAKADAKPAAAA) has biased composition (low complexity). The tRNA-binding domain occupies 591–694 (DFAKLDLRIG…SGAQPGMPVR (104 aa)).

It belongs to the class-I aminoacyl-tRNA synthetase family. MetG type 1 subfamily. In terms of assembly, homodimer. Requires Zn(2+) as cofactor.

The protein localises to the cytoplasm. The catalysed reaction is tRNA(Met) + L-methionine + ATP = L-methionyl-tRNA(Met) + AMP + diphosphate. Functionally, is required not only for elongation of protein synthesis but also for the initiation of all mRNA translation through initiator tRNA(fMet) aminoacylation. The polypeptide is Methionine--tRNA ligase (Xanthomonas axonopodis pv. citri (strain 306)).